The primary structure comprises 55 residues: Photosystem II reaction center protein K (55 aa).

Residues 1–18 constitute a propeptide that is removed on maturation; the sequence is MFNIYLENAFYLNGITFA. Residues 26-46 traverse the membrane as a helical segment; the sequence is IFDPIVDVMPIIPLFFFLLAF.

It belongs to the PsbK family. In terms of assembly, PSII is composed of 1 copy each of membrane proteins PsbA, PsbB, PsbC, PsbD, PsbE, PsbF, PsbH, PsbI, PsbJ, PsbK, PsbL, PsbM, PsbT, PsbX, PsbY, PsbZ, Psb30/Ycf12, at least 3 peripheral proteins of the oxygen-evolving complex and a large number of cofactors. It forms dimeric complexes.

The protein resides in the plastid. Its subcellular location is the chloroplast thylakoid membrane. Functionally, one of the components of the core complex of photosystem II (PSII). PSII is a light-driven water:plastoquinone oxidoreductase that uses light energy to abstract electrons from H(2)O, generating O(2) and a proton gradient subsequently used for ATP formation. It consists of a core antenna complex that captures photons, and an electron transfer chain that converts photonic excitation into a charge separation. The polypeptide is Photosystem II reaction center protein K (Marchantia polymorpha (Common liverwort)).